Reading from the N-terminus, the 413-residue chain is MGIFCSVIKFENLQDLRRLCHWGPIIALGVIAICSTMAMIDSVLWYWPLHTTGGSVNFIMLINWTVMILYNYFNAMFAGPGFVPRGWKPEKSQDSMYLQYCKVCQAYKAPRSHHCRKCNRCVMKMDHHCPWINNCCGHQNHASFTLFLLLAPLGCTHAAFIFVMTMYTQLYNRLSFGWNTVKIDMSAARRDPPPIVPFGLAAFAATLFALGLALGTTIAVGMLFFIQIKIILRNKTSIESWIEEKAKDRIQYYQLDEVFIFPYDMGSKWKNFKQVFTWSGVPEGDGLEWPIREGCDQYSLTIEQLKQKADKRVRSVRYKVIEDYNGACCPLNRGVRTFFTSPCTEEPRIRLQKGEFILATRGLRYWLYGDKILDDSFIEGTSRVRGWFPRNCVEKCPCDGDSDPAPEGEKKNR.

Over 1 to 24 (MGIFCSVIKFENLQDLRRLCHWGP) the chain is Cytoplasmic. A helical transmembrane segment spans residues 25–45 (IIALGVIAICSTMAMIDSVLW). Residues 46–57 (YWPLHTTGGSVN) lie on the Lumenal side of the membrane. The helical transmembrane segment at 58-78 (FIMLINWTVMILYNYFNAMFA) threads the bilayer. Over 79-143 (GPGFVPRGWK…NCCGHQNHAS (65 aa)) the chain is Cytoplasmic. The region spanning 99–149 (QYCKVCQAYKAPRSHHCRKCNRCVMKMDHHCPWINNCCGHQNHASFTLFLL) is the DHHC domain. Cysteine 129 acts as the S-palmitoyl cysteine intermediate in catalysis. A helical membrane pass occupies residues 144–164 (FTLFLLLAPLGCTHAAFIFVM). Residues 165–194 (TMYTQLYNRLSFGWNTVKIDMSAARRDPPP) lie on the Lumenal side of the membrane. The chain crosses the membrane as a helical span at residues 195 to 215 (IVPFGLAAFAATLFALGLALG). Residues 216–413 (TTIAVGMLFF…PAPEGEKKNR (198 aa)) are Cytoplasmic-facing. An SH3 domain is found at 313-398 (VRSVRYKVIE…PRNCVEKCPC (86 aa)). S-palmitoyl cysteine attachment occurs at residues cysteine 328, cysteine 329, and cysteine 343. Positions 410–413 (KKNR) match the Di-lysine motif motif.

It belongs to the DHHC palmitoyltransferase family. As to quaternary structure, homooligomerizes. Interacts with SELENOK. Post-translationally, palmitoylated at 3 different sites by ZDHHC16. The combination of the different palmitoylation events strongly affects the quaternary assembly of ZDHHC6, its localization, stability and function. Palmitoylation at Cys-328 accelerates the turnover of ZDHHC6. Depalmitoylated by LYPLA2.

It is found in the endoplasmic reticulum membrane. The catalysed reaction is L-cysteinyl-[protein] + hexadecanoyl-CoA = S-hexadecanoyl-L-cysteinyl-[protein] + CoA. The enzyme catalyses L-cysteinyl-[protein] + octadecanoyl-CoA = S-octadecanoyl-L-cysteinyl-[protein] + CoA. In terms of biological role, endoplasmic reticulum palmitoyl acyltransferase that mediates palmitoylation of proteins such as AMFR, CALX, ITPR1 and TFRC. Palmitoylates calnexin (CALX), which is required for its association with the ribosome-translocon complex and efficient folding of glycosylated proteins. Mediates palmitoylation of AMFR, promoting AMFR distribution to the peripheral endoplasmic reticulum. Together with SELENOK, palmitoylates ITPR1 in immune cells, leading to regulate ITPR1 stability and function. Stearoyltransferase that mediates stearoylation of TFRC to inhibit TFRC-mediated activation of the JNK pathway and mitochondrial fragmentation. The sequence is that of Palmitoyltransferase ZDHHC6 from Mus musculus (Mouse).